The primary structure comprises 287 residues: Protease HtpX homolog (287 aa).

A run of 2 helical transmembrane segments spans residues 4 to 24 and 35 to 53; these read VGLF…VMSL and LLLM…SLAL. His-139 provides a ligand contact to Zn(2+). Glu-140 is a catalytic residue. Residue His-143 participates in Zn(2+) binding. 2 helical membrane passes run 147–167 and 194–214; these read GDMV…IFLS and AVSM…VMWF. Glu-219 contributes to the Zn(2+) binding site.

This sequence belongs to the peptidase M48B family. Requires Zn(2+) as cofactor.

The protein resides in the cell inner membrane. In Desulfotalea psychrophila (strain LSv54 / DSM 12343), this protein is Protease HtpX homolog.